Consider the following 182-residue polypeptide: Adenine phosphoribosyltransferase (182 aa).

This sequence belongs to the purine/pyrimidine phosphoribosyltransferase family. In terms of assembly, homodimer.

The protein resides in the cytoplasm. It carries out the reaction AMP + diphosphate = 5-phospho-alpha-D-ribose 1-diphosphate + adenine. The protein operates within purine metabolism; AMP biosynthesis via salvage pathway; AMP from adenine: step 1/1. Catalyzes a salvage reaction resulting in the formation of AMP, that is energically less costly than de novo synthesis. The protein is Adenine phosphoribosyltransferase of Ectopseudomonas mendocina (strain ymp) (Pseudomonas mendocina).